A 336-amino-acid chain; its full sequence is Transcription factor MYB29 (336 aa).

HTH myb-type domains lie at Gly-9–Ile-65 and Lys-66–Leu-116. 2 DNA-binding regions (H-T-H motif) span residues Trp-37–Leu-61 and Trp-89–Leu-112. A disordered region spans residues Lys-127–Asp-170. The segment covering Ser-141–Ser-154 has biased composition (low complexity). Residues Lys-155–Asp-164 show a composition bias toward polar residues.

As to quaternary structure, can form complexes with MYC2, MYC3 or MYC4. Expressed in both vegetative and generative organs. Mostly present in seedlings, inflorescences, roots and stems, and, to a lower extent, in leaves (in midvein and trichomes) and siliques.

Its subcellular location is the nucleus. Its function is as follows. Plays a minor rheostat role in aliphatic glucosinolates (GLSs) biosynthesis, mostly short chained. Together with MYB28/HAG1 and MYB76/HAG2, promotes aliphatic glucosinolate biosynthesis but represses indolic glucosinolate biosynthesis. Prevents insect performance (e.g. lepidopteran insect Mamestra brassicae) by promoting glucosinolates. The polypeptide is Transcription factor MYB29 (MYB29) (Arabidopsis thaliana (Mouse-ear cress)).